The sequence spans 120 residues: NADH dehydrogenase [ubiquinone] 1 subunit C2 (120 aa).

Residues 57-76 (GLHRQLLFVTSFVFAGYFYL) form a helical membrane-spanning segment.

Belongs to the complex I NDUFC2 subunit family. As to quaternary structure, complex I is composed of 45 different subunits. Interacts with TMEM242.

It is found in the mitochondrion inner membrane. Functionally, accessory subunit of the mitochondrial membrane respiratory chain NADH dehydrogenase (Complex I), that is believed not to be involved in catalysis but required for the complex assembly. Complex I functions in the transfer of electrons from NADH to the respiratory chain. The immediate electron acceptor for the enzyme is believed to be ubiquinone. The polypeptide is NADH dehydrogenase [ubiquinone] 1 subunit C2 (Mus musculus (Mouse)).